Here is a 389-residue protein sequence, read N- to C-terminus: MDLFEYQAKELFAKHGVPTSAGRVTDTVAGAREIAEEIGKPVMVKAQVKVGGRGKAGGVKYSPDVDAAVANAEAILGLDIKGHVVKKLLVAEASDIAEEYYISFLLDRTNRTYLAMCSVEGGVEIEVTAEENPDALAKIPVDAVKGVDLAFARSIAEAGKLPAEVLDAAAVTIQKLWEVFINEDALLVEVNPLVRTPDDQILALDGKVTLDENAAFRQPGHEAFEDRDATDPLELKAKENDLNYVKLDGEVGIIGNGAGLVMSTLDVVAYAGENHGGVKPANFLDIGGGASAAVMAAGLDVILNDAQVKSVFVNVFGGITACDAVANGIVGALKTLGDEANKPLVVRLDGNNVEEGRRILAEANHPLVTVVATMDEAADKAAELAHAAK.

An ATP-grasp domain is found at 9 to 236 (KELFAKHGVP…RDATDPLELK (228 aa)). ATP is bound by residues Lys45, 52–54 (GRG), Ser94, and Glu99. Residues Asn191 and Asp205 each coordinate Mg(2+). Substrate contacts are provided by residues Asn256 and 318–320 (GIT).

Belongs to the succinate/malate CoA ligase beta subunit family. As to quaternary structure, heterotetramer of two alpha and two beta subunits. The cofactor is Mg(2+).

It carries out the reaction succinate + ATP + CoA = succinyl-CoA + ADP + phosphate. The enzyme catalyses GTP + succinate + CoA = succinyl-CoA + GDP + phosphate. Its pathway is carbohydrate metabolism; tricarboxylic acid cycle; succinate from succinyl-CoA (ligase route): step 1/1. Its function is as follows. Succinyl-CoA synthetase functions in the citric acid cycle (TCA), coupling the hydrolysis of succinyl-CoA to the synthesis of either ATP or GTP and thus represents the only step of substrate-level phosphorylation in the TCA. The beta subunit provides nucleotide specificity of the enzyme and binds the substrate succinate, while the binding sites for coenzyme A and phosphate are found in the alpha subunit. In Rhodococcus erythropolis (strain PR4 / NBRC 100887), this protein is Succinate--CoA ligase [ADP-forming] subunit beta.